The primary structure comprises 442 residues: Trigger factor (442 aa).

One can recognise a PPIase FKBP-type domain in the interval 162–247; sequence GDQVTIDAIG…IKAVHTSEPT (86 aa).

Belongs to the FKBP-type PPIase family. Tig subfamily.

It is found in the cytoplasm. The catalysed reaction is [protein]-peptidylproline (omega=180) = [protein]-peptidylproline (omega=0). Its function is as follows. Involved in protein export. Acts as a chaperone by maintaining the newly synthesized protein in an open conformation. Functions as a peptidyl-prolyl cis-trans isomerase. In Rickettsia canadensis (strain McKiel), this protein is Trigger factor.